An 800-amino-acid chain; its full sequence is Putative antiporter subunit mnhA2 (800 aa).

The next 20 helical transmembrane spans lie at M1–S21, I33–A53, G78–A98, L118–F138, F167–M187, G207–F227, T241–L261, Y273–L293, G300–G320, I331–I351, L387–S407, F424–F444, P472–V492, G527–I547, I595–L615, G627–I647, L651–M671, L676–S696, I712–T732, and L768–L788.

This sequence belongs to the CPA3 antiporters (TC 2.A.63) subunit A family. As to quaternary structure, may form a heterooligomeric complex that consists of seven subunits: mnhA2, mnhB2, mnhC2, mnhD2, mnhE2, mnhF2 and mnhG2.

The protein localises to the cell membrane. This chain is Putative antiporter subunit mnhA2 (mnhA2), found in Staphylococcus aureus (strain USA300).